Here is a 91-residue protein sequence, read N- to C-terminus: Cell division topological specificity factor (91 aa).

The protein belongs to the MinE family.

Its function is as follows. Prevents the cell division inhibition by proteins MinC and MinD at internal division sites while permitting inhibition at polar sites. This ensures cell division at the proper site by restricting the formation of a division septum at the midpoint of the long axis of the cell. The protein is Cell division topological specificity factor of Chloroflexus aggregans (strain MD-66 / DSM 9485).